Consider the following 122-residue polypeptide: Small ribosomal subunit protein uS13 (122 aa).

A disordered region spans residues 96–122 (PVRGQRTRTNARTRKGPKKTVGVRRAK).

It belongs to the universal ribosomal protein uS13 family. As to quaternary structure, part of the 30S ribosomal subunit. Forms a loose heterodimer with protein S19. Forms two bridges to the 50S subunit in the 70S ribosome.

Functionally, located at the top of the head of the 30S subunit, it contacts several helices of the 16S rRNA. In the 70S ribosome it contacts the 23S rRNA (bridge B1a) and protein L5 of the 50S subunit (bridge B1b), connecting the 2 subunits; these bridges are implicated in subunit movement. Contacts the tRNAs in the A and P-sites. This chain is Small ribosomal subunit protein uS13, found in Halothermothrix orenii (strain H 168 / OCM 544 / DSM 9562).